We begin with the raw amino-acid sequence, 317 residues long: MMKANHSLTVEFILIGFSDHTDLKTLLFLLFSAIYLVTIVGNLGLVALIYMEPRLHTPMYIFLGNLALMDSCCSCAITPKMLENFFSVDRRISLYECMVQFYFLCLAETADCFLLAAMAYDRYVAICNPLQYHTMMSKKLSIQMSIGTFIASNLHSLIHTGCLLRLNFCKSRRIDHFFCDILPLYKLSCTDPFINELMLYIFSMPIQVFTITTVLVSYSCILLTVFKMKSKDGRGKAFSTCASHFFSVSIFYICLLMYIGPSKNSNKDIPVGVFYTIVIPLLNPFIYSLRNKEVVNAVKKVMKTHSIFKNSSASIAH.

Over 1 to 28 (MMKANHSLTVEFILIGFSDHTDLKTLLF) the chain is Extracellular. Asn-5 is a glycosylation site (N-linked (GlcNAc...) asparagine). The helical transmembrane segment at 29-49 (LLFSAIYLVTIVGNLGLVALI) threads the bilayer. Topologically, residues 50-56 (YMEPRLH) are cytoplasmic. Residues 57-77 (TPMYIFLGNLALMDSCCSCAI) traverse the membrane as a helical segment. The Extracellular portion of the chain corresponds to 78–93 (TPKMLENFFSVDRRIS). Residues 94–114 (LYECMVQFYFLCLAETADCFL) form a helical membrane-spanning segment. Residues Cys-97 and Cys-189 are joined by a disulfide bond. The Cytoplasmic portion of the chain corresponds to 115 to 144 (LAAMAYDRYVAICNPLQYHTMMSKKLSIQM). The chain crosses the membrane as a helical span at residues 145 to 165 (SIGTFIASNLHSLIHTGCLLR). Topologically, residues 166–198 (LNFCKSRRIDHFFCDILPLYKLSCTDPFINELM) are extracellular. The chain crosses the membrane as a helical span at residues 199–219 (LYIFSMPIQVFTITTVLVSYS). At 220-239 (CILLTVFKMKSKDGRGKAFS) the chain is on the cytoplasmic side. Residues 240-259 (TCASHFFSVSIFYICLLMYI) traverse the membrane as a helical segment. The Extracellular segment spans residues 260-268 (GPSKNSNKD). Residues 269–289 (IPVGVFYTIVIPLLNPFIYSL) form a helical membrane-spanning segment. Residues 290 to 317 (RNKEVVNAVKKVMKTHSIFKNSSASIAH) lie on the Cytoplasmic side of the membrane.

Belongs to the G-protein coupled receptor 1 family.

Its subcellular location is the cell membrane. Functionally, potential odorant receptor. The sequence is that of Olfactory receptor 5K17 from Mus musculus (Mouse).